We begin with the raw amino-acid sequence, 309 residues long: Mitochondrial brown fat uncoupling protein 1 (309 aa).

The Mitochondrial intermembrane portion of the chain corresponds to 2-10; that stretch reads VGHTESDVP. A helical transmembrane segment spans residues 11–32; it reads PTMAVKIFSAGVAACVADIITF. 3 Solcar repeats span residues 11-106, 113-203, and 212-297; these read PTMA…VQEF, ASLG…MKEA, and DDVP…LKQE. Over 33–77 the chain is Mitochondrial matrix; it reads PLDTAKVRLQVGSAIQGECLISSAIRYKGVLGTIITLAKTEGPVK. Fatty acid 16:0 is bound at residue Lys60. A helical transmembrane segment spans residues 78-100; sequence LYSGLPAGLQRQISFASLRIGLY. Residues 101-118 are Mitochondrial intermembrane-facing; it reads DTVQEFFTTGKEASLGSK. A helical transmembrane segment spans residues 119-135; it reads ISAGLMTGGVAVFIGQP. Topologically, residues 136 to 180 are mitochondrial matrix; it reads TEVVKVRLQAQSHLHGPKPRYTGTYNAYRIIATTEGLTGLWKGTT. A helical transmembrane segment spans residues 181–197; it reads PNLTRNVIINCTELVTY. The Mitochondrial intermembrane portion of the chain corresponds to 198–214; that stretch reads DLMKEALVKNKLLADDV. The helical transmembrane segment at 215-234 threads the bilayer; sequence PCHFVSAVVAGFCTTVLSSP. At 235 to 268 the chain is on the mitochondrial matrix side; the sequence is VDVVKTRFVNSSPGQYTSVPNCAMMMLTREGPSA. A Cysteine sulfenic acid (-SOH) modification is found at Cys256. A helical transmembrane segment spans residues 269-291; the sequence is FFKGFVPSFLRLGSWNIIMFVCF. Lys271 is a binding site for fatty acid 16:0. Residues 292 to 309 are Mitochondrial intermembrane-facing; it reads EQLKQELMKSRHTMDCAT.

Belongs to the mitochondrial carrier (TC 2.A.29) family. Most probably functions as a monomer. Binds one purine nucleotide per monomer. However, has also been suggested to function as a homodimer or a homotetramer. Tightly associates with cardiolipin in the mitochondrion inner membrane; may stabilize and regulate its activity. In terms of processing, may undergo sulfenylation upon cold exposure. May increase the sensitivity of UCP1 thermogenic function to the activation by noradrenaline probably through structural effects. Post-translationally, may undergo ubiquitin-mediated proteasomal degradation.

Its subcellular location is the mitochondrion inner membrane. The catalysed reaction is H(+)(in) = H(+)(out). With respect to regulation, has no constitutive proton transporter activity and has to be activated by long-chain fatty acids/LCFAs. Inhibited by purine nucleotides. Both purine nucleotides and LCFAs bind the cytosolic side of the transporter and directly compete to activate or inhibit it. Activated by noradrenaline and reactive oxygen species. Despite lacking canonical translational encoding for selenocysteine, a small pool of the protein has been observed to selectively incorporate selenocysteine at 'Cys-256'. Selenocysteine-modified protein is highly sensitive to redox modification and may constitute a pool of protein highly sensitive to activation by elevated levels of reactive oxygen species (ROS). Its function is as follows. Mitochondrial protein responsible for thermogenic respiration, a specialized capacity of brown adipose tissue and beige fat that participates in non-shivering adaptive thermogenesis to temperature and diet variations and more generally to the regulation of energy balance. Functions as a long-chain fatty acid/LCFA and proton symporter, simultaneously transporting one LCFA and one proton through the inner mitochondrial membrane. However, LCFAs remaining associated with the transporter via their hydrophobic tails, it results in an apparent transport of protons activated by LCFAs. Thereby, dissipates the mitochondrial proton gradient and converts the energy of substrate oxydation into heat instead of ATP. Regulates the production of reactive oxygen species/ROS by mitochondria. The sequence is that of Mitochondrial brown fat uncoupling protein 1 from Bos taurus (Bovine).